The following is a 633-amino-acid chain: Leucine-rich repeat and IQ domain-containing protein 3 (633 aa).

3 LRR repeats span residues 51-72 (SLRVCIFSNNFLTDIQPLQSCK), 73-94 (KLIKLDLHGNQIKTLPDKNFWS), and 98-119 (NLKLLYLHDNGFSKLKNICVLS). One can recognise an LRRCT domain in the interval 132-179 (CPVSLKKGYRHVLVNSIWPLKALDHHVISDEEIIQNWRLPERFKTFSP). Residues 215-244 (HNSPVLIIQRWIRGFIVRKHLSPYFKHKKH) form the IQ domain. Residues 324–343 (SKQPRHHIHKGQKAMKAESE) form a disordered region. Over residues 325 to 336 (KQPRHHIHKGQK) the composition is skewed to basic residues. The stretch at 556 to 617 (IEKWEEQKYK…AKVEYIKTFY (62 aa)) forms a coiled coil.

This chain is Leucine-rich repeat and IQ domain-containing protein 3 (Lrriq3), found in Mus musculus (Mouse).